The chain runs to 343 residues: Protein RecA (343 aa).

ATP is bound at residue 68–75; that stretch reads GPESGGKT.

This sequence belongs to the RecA family.

Its subcellular location is the cytoplasm. In terms of biological role, can catalyze the hydrolysis of ATP in the presence of single-stranded DNA, the ATP-dependent uptake of single-stranded DNA by duplex DNA, and the ATP-dependent hybridization of homologous single-stranded DNAs. It interacts with LexA causing its activation and leading to its autocatalytic cleavage. The chain is Protein RecA from Syntrophus aciditrophicus (strain SB).